We begin with the raw amino-acid sequence, 131 residues long: Holo-[acyl-carrier-protein] synthase (131 aa).

Residues Asp8 and Glu62 each contribute to the Mg(2+) site.

This sequence belongs to the P-Pant transferase superfamily. AcpS family. Mg(2+) serves as cofactor.

The protein resides in the cytoplasm. It catalyses the reaction apo-[ACP] + CoA = holo-[ACP] + adenosine 3',5'-bisphosphate + H(+). Functionally, transfers the 4'-phosphopantetheine moiety from coenzyme A to a Ser of acyl-carrier-protein. This chain is Holo-[acyl-carrier-protein] synthase, found in Delftia acidovorans (strain DSM 14801 / SPH-1).